The sequence spans 425 residues: Xylose isomerase (425 aa).

Residues His101 and Asp104 contribute to the active site. Mg(2+)-binding residues include Glu232, Glu268, His271, Asp296, Asp307, Asp309, and Asp339.

It belongs to the xylose isomerase family. As to quaternary structure, homotetramer. Mg(2+) serves as cofactor.

The protein resides in the cytoplasm. It catalyses the reaction alpha-D-xylose = alpha-D-xylulofuranose. The sequence is that of Xylose isomerase from Salmonella paratyphi A (strain ATCC 9150 / SARB42).